The primary structure comprises 369 residues: Queuine tRNA-ribosyltransferase (369 aa).

Aspartate 89 acts as the Proton acceptor in catalysis. Substrate is bound by residues 89–93 (DSGGF), aspartate 142, glutamine 184, and glycine 211. An RNA binding region spans residues 242 to 248 (GGGSPEL). Aspartate 261 serves as the catalytic Nucleophile. The segment at 266-270 (TRIAR) is RNA binding; important for wobble base 34 recognition. Cysteine 299, cysteine 301, cysteine 304, and histidine 330 together coordinate Zn(2+).

The protein belongs to the queuine tRNA-ribosyltransferase family. Homodimer. Within each dimer, one monomer is responsible for RNA recognition and catalysis, while the other monomer binds to the replacement base PreQ1. Requires Zn(2+) as cofactor.

It catalyses the reaction 7-aminomethyl-7-carbaguanine + guanosine(34) in tRNA = 7-aminomethyl-7-carbaguanosine(34) in tRNA + guanine. Its pathway is tRNA modification; tRNA-queuosine biosynthesis. Catalyzes the base-exchange of a guanine (G) residue with the queuine precursor 7-aminomethyl-7-deazaguanine (PreQ1) at position 34 (anticodon wobble position) in tRNAs with GU(N) anticodons (tRNA-Asp, -Asn, -His and -Tyr). Catalysis occurs through a double-displacement mechanism. The nucleophile active site attacks the C1' of nucleotide 34 to detach the guanine base from the RNA, forming a covalent enzyme-RNA intermediate. The proton acceptor active site deprotonates the incoming PreQ1, allowing a nucleophilic attack on the C1' of the ribose to form the product. After dissociation, two additional enzymatic reactions on the tRNA convert PreQ1 to queuine (Q), resulting in the hypermodified nucleoside queuosine (7-(((4,5-cis-dihydroxy-2-cyclopenten-1-yl)amino)methyl)-7-deazaguanosine). This chain is Queuine tRNA-ribosyltransferase, found in Thermotoga sp. (strain RQ2).